The following is a 230-amino-acid chain: Transmembrane protein 225 (230 aa).

Topologically, residues 1–8 (MMHIPNRS) are cytoplasmic. Residues 9 to 29 (IQAANIFFSSGAILLLIVGLI) traverse the membrane as a helical segment. Residues 30 to 71 (MEDWVELIPKVRKDKTTHSPWLGCCPPFWPEESLEVVRRIMR) are Extracellular-facing. Residues 72 to 92 (MTLNISIYLNLIIGLQFSYMI) form a helical membrane-spanning segment. Residues 93-99 (SQNKCVH) lie on the Cytoplasmic side of the membrane. The chain crosses the membrane as a helical span at residues 100-120 (LLVGFLSFFAGCLLFYAIIVY). The Extracellular portion of the chain corresponds to 121–139 (HHKLNKGQYVYFVNYKTKW). The chain crosses the membrane as a helical span at residues 140-160 (IAFTVYLTIALFLTCGIFCFI). The Cytoplasmic portion of the chain corresponds to 161 to 230 (QSTNRCECMK…TQARRVTWAL (70 aa)). Residues 224 to 228 (RRVTW) carry the RVxF motif.

Interacts (via RVxF motif) with PPP1CC. Expressed in testis, epididymis and spermatozoa (at protein level). Not expressed in brain, heart, lung, liver, spleen, kidney and skeletal muscle.

Its subcellular location is the cytoplasmic vesicle. The protein resides in the secretory vesicle. The protein localises to the acrosome membrane. In terms of biological role, probably inhibits protein phosphatase 1 (PP1) in sperm via binding to catalytic subunit PPP1CC. This is Transmembrane protein 225 (Tmem225) from Mus musculus (Mouse).